The sequence spans 345 residues: Uroporphyrinogen decarboxylase (345 aa).

Substrate is bound by residues 30-34, Asp79, Tyr154, Ser209, and His322; that span reads RQAGR.

The protein belongs to the uroporphyrinogen decarboxylase family. Homodimer.

It localises to the cytoplasm. The enzyme catalyses uroporphyrinogen III + 4 H(+) = coproporphyrinogen III + 4 CO2. The protein operates within porphyrin-containing compound metabolism; protoporphyrin-IX biosynthesis; coproporphyrinogen-III from 5-aminolevulinate: step 4/4. Catalyzes the decarboxylation of four acetate groups of uroporphyrinogen-III to yield coproporphyrinogen-III. This Nocardioides sp. (strain ATCC BAA-499 / JS614) protein is Uroporphyrinogen decarboxylase.